We begin with the raw amino-acid sequence, 126 residues long: Protein ApaG (126 aa).

One can recognise an ApaG domain in the interval Ser-2–His-126.

The sequence is that of Protein ApaG from Pseudomonas fluorescens (strain SBW25).